Reading from the N-terminus, the 312-residue chain is MTKIIFMGTPEFSVPVLTQLASTYDVVAVVTQPDRPVGRKRVLTPPPVKKAALELAIPVYQPEKLRTSSELEELIALEADLLVTAAYGQILPNSLLESPKHGAINVHASLLPEYRGGAPVHYALLDGKTETGVTIMYMVEKLDAGDMISQRKIPITDEDNTGTMFDKLSKLGAELLMDTLPDFLAGKITAIPQDPEKVTFARNISREQEKIDWTKPGRTIFNQIRGLSPWPVAYTTLEEKPFKIWEATYEETKESGEPGAILADKTTLKIVTGDGTLIVPTVIQPAGKPKMDIHSFMSGAGRNLSKTTRFGE.

109 to 112 (SLLP) contacts (6S)-5,6,7,8-tetrahydrofolate.

This sequence belongs to the Fmt family.

The catalysed reaction is L-methionyl-tRNA(fMet) + (6R)-10-formyltetrahydrofolate = N-formyl-L-methionyl-tRNA(fMet) + (6S)-5,6,7,8-tetrahydrofolate + H(+). Attaches a formyl group to the free amino group of methionyl-tRNA(fMet). The formyl group appears to play a dual role in the initiator identity of N-formylmethionyl-tRNA by promoting its recognition by IF2 and preventing the misappropriation of this tRNA by the elongation apparatus. This Listeria monocytogenes serotype 4a (strain HCC23) protein is Methionyl-tRNA formyltransferase.